The sequence spans 446 residues: MESDNLQDPQEETLTCSICQGIFMDPVYLRCGHKFCETCLLLFQEDIKFPAYCPTCRQPCNQRYINDISLKKQVFIVRKKRLMEYLNSEEHKCVTHKAKKMIFCDKSKILLCHLCSDSQEHSGHTHCSIDVAVQEKMEELLKHMDSLWQRLKIQQNYVEKERRMTLWWLKSVKLREEVIKRVYGKQCPPLSEERDQHIECLRHQSNTTLEELRKSEATIVHERNQLTEVYQELMTMSQRPYQELLVQDLDDLFRRSKLAAKVDMPQGMIPRLRAHSIPGLTARLNSFRVKISFKHSIMFGYNSVRPFDIRLLHESTSLDSAKTHRVSWGKKSFSRGKYYWEVDLKDYRRWTVGVCKDPWLRGRSYVVTPTDIFLLECLRNKDHYILITRIGREHYIEKPVGQVGVFLDCEGGYVSFVDVAKSSLILSYSPGTFHCAVRPFFFAAYT.

The segment at 16 to 57 (CSICQGIFMDPVYLRCGHKFCETCLLLFQEDIKFPAYCPTCR) adopts an RING-type zinc-finger fold. Residues 88-129 (SEEHKCVTHKAKKMIFCDKSKILLCHLCSDSQEHSGHTHCSI) form a B box-type zinc finger. The Zn(2+) site is built by Cys93, His96, Cys115, and His121. The region spanning 271 to 446 (RLRAHSIPGL…VRPFFFAAYT (176 aa)) is the B30.2/SPRY domain.

It belongs to the TRIM/RBCC family.

The protein is Tripartite motif-containing protein 43C of Mus musculus (Mouse).